We begin with the raw amino-acid sequence, 463 residues long: L-seryl-tRNA(Sec) selenium transferase (463 aa).

K295 carries the post-translational modification N6-(pyridoxal phosphate)lysine.

It belongs to the SelA family. In terms of assembly, homodecamer; pentamer of dimers. Binds only one seryl-tRNA(Sec) per dimer. Pyridoxal 5'-phosphate is required as a cofactor.

The protein localises to the cytoplasm. It catalyses the reaction L-seryl-tRNA(Sec) + selenophosphate + H(+) = L-selenocysteinyl-tRNA(Sec) + phosphate. The protein operates within aminoacyl-tRNA biosynthesis; selenocysteinyl-tRNA(Sec) biosynthesis; selenocysteinyl-tRNA(Sec) from L-seryl-tRNA(Sec) (bacterial route): step 1/1. Converts seryl-tRNA(Sec) to selenocysteinyl-tRNA(Sec) required for selenoprotein biosynthesis. This Escherichia coli (strain K12 / MC4100 / BW2952) protein is L-seryl-tRNA(Sec) selenium transferase.